Here is a 114-residue protein sequence, read N- to C-terminus: UPF0102 protein jhp_0762 (114 aa).

It belongs to the UPF0102 family.

The sequence is that of UPF0102 protein jhp_0762 from Helicobacter pylori (strain J99 / ATCC 700824) (Campylobacter pylori J99).